Here is a 735-residue protein sequence, read N- to C-terminus: Phosphoribosylformylglycinamidine synthase subunit PurL (735 aa).

His-48 is a catalytic residue. Residues Tyr-51 and Lys-90 each contribute to the ATP site. Glu-92 contributes to the Mg(2+) binding site. Residues 93–96 and Arg-115 each bind substrate; that span reads SHNH. The active-site Proton acceptor is the His-94. Asp-116 serves as a coordination point for Mg(2+). Substrate is bound at residue Gln-239. Asp-267 provides a ligand contact to Mg(2+). A substrate-binding site is contributed by 311–313; that stretch reads ESQ. ATP is bound by residues Asp-492 and Gly-529. Asn-530 is a binding site for Mg(2+). Ser-532 is a binding site for substrate.

This sequence belongs to the FGAMS family. As to quaternary structure, monomer. Part of the FGAM synthase complex composed of 1 PurL, 1 PurQ and 2 PurS subunits.

Its subcellular location is the cytoplasm. The catalysed reaction is N(2)-formyl-N(1)-(5-phospho-beta-D-ribosyl)glycinamide + L-glutamine + ATP + H2O = 2-formamido-N(1)-(5-O-phospho-beta-D-ribosyl)acetamidine + L-glutamate + ADP + phosphate + H(+). It functions in the pathway purine metabolism; IMP biosynthesis via de novo pathway; 5-amino-1-(5-phospho-D-ribosyl)imidazole from N(2)-formyl-N(1)-(5-phospho-D-ribosyl)glycinamide: step 1/2. Its function is as follows. Part of the phosphoribosylformylglycinamidine synthase complex involved in the purines biosynthetic pathway. Catalyzes the ATP-dependent conversion of formylglycinamide ribonucleotide (FGAR) and glutamine to yield formylglycinamidine ribonucleotide (FGAM) and glutamate. The FGAM synthase complex is composed of three subunits. PurQ produces an ammonia molecule by converting glutamine to glutamate. PurL transfers the ammonia molecule to FGAR to form FGAM in an ATP-dependent manner. PurS interacts with PurQ and PurL and is thought to assist in the transfer of the ammonia molecule from PurQ to PurL. In Bradyrhizobium sp. (strain BTAi1 / ATCC BAA-1182), this protein is Phosphoribosylformylglycinamidine synthase subunit PurL.